The primary structure comprises 252 residues: Enolase-phosphatase E1 (252 aa).

Mg(2+)-binding residues include Asp14 and Glu16. Substrate is bound by residues 143 to 144 (SS) and Lys177. Asp202 is a Mg(2+) binding site.

This sequence belongs to the HAD-like hydrolase superfamily. MasA/MtnC family. As to quaternary structure, monomer. Mg(2+) is required as a cofactor.

The protein resides in the cytoplasm. It is found in the nucleus. The enzyme catalyses 5-methylsulfanyl-2,3-dioxopentyl phosphate + H2O = 1,2-dihydroxy-5-(methylsulfanyl)pent-1-en-3-one + phosphate. Its pathway is amino-acid biosynthesis; L-methionine biosynthesis via salvage pathway; L-methionine from S-methyl-5-thio-alpha-D-ribose 1-phosphate: step 3/6. The protein operates within amino-acid biosynthesis; L-methionine biosynthesis via salvage pathway; L-methionine from S-methyl-5-thio-alpha-D-ribose 1-phosphate: step 4/6. In terms of biological role, bifunctional enzyme that catalyzes the enolization of 2,3-diketo-5-methylthiopentyl-1-phosphate (DK-MTP-1-P) into the intermediate 2-hydroxy-3-keto-5-methylthiopentenyl-1-phosphate (HK-MTPenyl-1-P), which is then dephosphorylated to form the acireductone 1,2-dihydroxy-3-keto-5-methylthiopentene (DHK-MTPene). The chain is Enolase-phosphatase E1 from Drosophila persimilis (Fruit fly).